The following is a 171-amino-acid chain: Apoptosis regulator Bcl-2 homolog (171 aa).

As to quaternary structure, interacts with host BECN1; this interaction inhibits host autophagy. Interacts with host BAK1 and BAX.

It is found in the host cytoplasm. Functionally, plays a role in the protection against apoptosis mediated by cytotoxic cells during the immune response to acute and persistent viral infection. Contributes therefore to latency establishment. Plays also a role in the inhibition of host starvation-induced autophagy which ultimately contributes to the viral chronic infection. The chain is Apoptosis regulator Bcl-2 homolog (vBCL2) from Murid herpesvirus 4 (MuHV-4).